We begin with the raw amino-acid sequence, 296 residues long: Cell division protein DivIB (296 aa).

The Cytoplasmic portion of the chain corresponds to 1–25; sequence MMEDKIIHTPRFDEQRRMRRKKRQR. The helical transmembrane segment at 26–46 threads the bilayer; sequence LQLFIFLSIVAIVSLILIYMF. At 47 to 296 the chain is on the extracellular side; that stretch reads TSISYVKKIS…KELNQVKKNS (250 aa). The region spanning 50-118 is the POTRA domain; it reads SYVKKISVND…NTVSINVEEY (69 aa).

This sequence belongs to the FtsQ/DivIB family. DivIB subfamily.

The protein localises to the cell membrane. Cell division protein that may be involved in stabilizing or promoting the assembly of the division complex. In Macrococcus caseolyticus (strain JCSC5402) (Macrococcoides caseolyticum), this protein is Cell division protein DivIB.